The primary structure comprises 325 residues: Ribosomal RNA small subunit methyltransferase H (325 aa).

S-adenosyl-L-methionine-binding positions include 38 to 40 (GGY), Asp55, Phe82, Asp103, and Gln110. Disordered regions lie at residues 256–275 (SGGD…AARA) and 281–307 (PARK…RSAV).

The protein belongs to the methyltransferase superfamily. RsmH family.

It localises to the cytoplasm. It carries out the reaction cytidine(1402) in 16S rRNA + S-adenosyl-L-methionine = N(4)-methylcytidine(1402) in 16S rRNA + S-adenosyl-L-homocysteine + H(+). Its function is as follows. Specifically methylates the N4 position of cytidine in position 1402 (C1402) of 16S rRNA. In Sphingopyxis alaskensis (strain DSM 13593 / LMG 18877 / RB2256) (Sphingomonas alaskensis), this protein is Ribosomal RNA small subunit methyltransferase H.